Here is a 246-residue protein sequence, read N- to C-terminus: Granzyme H (246 aa).

The signal sequence occupies residues methionine 1–threonine 18. A propeptide spans glutamate 19–glutamate 20 (activation peptide). A Peptidase S1 domain is found at isoleucine 21 to lysine 244. A mediates the preference for acidic residues at the P3' and P4' sites region spans residues arginine 46–arginine 48. The cysteines at positions 49 and 65 are disulfide-linked. Residue histidine 64 is the Charge relay system of the active site. N-linked (GlcNAc...) asparagine glycans are attached at residues asparagine 71 and asparagine 104. The active-site Charge relay system is aspartate 108. 2 disulfides stabilise this stretch: cysteine 142–cysteine 208 and cysteine 172–cysteine 187. An N-linked (GlcNAc...) asparagine glycan is attached at asparagine 179. Residue serine 202 is the Charge relay system of the active site.

Belongs to the peptidase S1 family. Granzyme subfamily. As to expression, constitutively expressed in NK cells.

Its subcellular location is the cytolytic granule. With respect to regulation, inhibited by SERPINB1. Cytotoxic chymotrypsin-like serine protease with preference for bulky and aromatic residues at the P1 position and acidic residues at the P3' and P4' sites. Probably necessary for target cell lysis in cell-mediated immune responses. Participates in the antiviral response via direct cleavage of several proteins essential for viral replication. The polypeptide is Granzyme H (GZMH) (Homo sapiens (Human)).